The chain runs to 589 residues: Phenylalanine--tRNA ligase beta subunit (589 aa).

Positions 302–379 constitute a B5 domain; sequence LAYRKEMVRA…IAYGYNNIQM (78 aa). Residues D357, D363, E366, and D367 each contribute to the Mg(2+) site.

The protein belongs to the phenylalanyl-tRNA synthetase beta subunit family. Type 2 subfamily. Heterotetramer; dimer of two heterodimers formed by FARSA and FARSB. Mg(2+) is required as a cofactor.

It localises to the cytoplasm. It carries out the reaction tRNA(Phe) + L-phenylalanine + ATP = L-phenylalanyl-tRNA(Phe) + AMP + diphosphate + H(+). The protein is Phenylalanine--tRNA ligase beta subunit (FARSB) of Homo sapiens (Human).